A 198-amino-acid chain; its full sequence is DnaJ homolog subfamily C member 12 (198 aa).

The residue at position 1 (methionine 1) is an N-acetylmethionine. The 66-residue stretch at 14-79 (DYYTLLGCDE…ESRARYDHWR (66 aa)) folds into the J domain. Positions 121–183 (TNTAQNKERS…CGHLHFRWSG (63 aa)) are disordered. Residues 126-156 (NKERSEQRETKQGDPDSTPEKMMQKESESPE) show a composition bias toward basic and acidic residues. Serine 160, serine 166, and serine 182 each carry phosphoserine.

Interacts with HSPA8. Interacts with TPH1. Interacts with TPH2.

It is found in the cytoplasm. In terms of biological role, probable co-chaperone that participates in the proper folding of biopterin-dependent aromatic amino acid hydroxylases, which include phenylalanine-4-hydroxylase (PAH), tyrosine 3-monooxygenase (TH) and peripheral and neuronal tryptophan hydroxylases (TPH1 and TPH2). The sequence is that of DnaJ homolog subfamily C member 12 (Dnajc12) from Rattus norvegicus (Rat).